The following is a 471-amino-acid chain: Cysteine--tRNA ligase (471 aa).

Cysteine 29 is a Zn(2+) binding site. The short motif at 31 to 41 (PTVYNYIHIGN) is the 'HIGH' region element. Zn(2+) contacts are provided by cysteine 209, histidine 234, and glutamate 238. The 'KMSKS' region signature appears at 266–270 (KMSKS). Lysine 269 serves as a coordination point for ATP.

Belongs to the class-I aminoacyl-tRNA synthetase family. In terms of assembly, monomer. Zn(2+) is required as a cofactor.

The protein resides in the cytoplasm. The enzyme catalyses tRNA(Cys) + L-cysteine + ATP = L-cysteinyl-tRNA(Cys) + AMP + diphosphate. In Listeria monocytogenes serovar 1/2a (strain ATCC BAA-679 / EGD-e), this protein is Cysteine--tRNA ligase.